The primary structure comprises 276 residues: 2-dehydro-3-deoxyphosphooctonate aldolase (276 aa).

Belongs to the KdsA family.

The protein resides in the cytoplasm. It carries out the reaction D-arabinose 5-phosphate + phosphoenolpyruvate + H2O = 3-deoxy-alpha-D-manno-2-octulosonate-8-phosphate + phosphate. Its pathway is carbohydrate biosynthesis; 3-deoxy-D-manno-octulosonate biosynthesis; 3-deoxy-D-manno-octulosonate from D-ribulose 5-phosphate: step 2/3. The protein operates within bacterial outer membrane biogenesis; lipopolysaccharide biosynthesis. The polypeptide is 2-dehydro-3-deoxyphosphooctonate aldolase (Helicobacter pylori (strain P12)).